Here is a 303-residue protein sequence, read N- to C-terminus: MNPQELKSILSSGLLSFPVTDFNAQGDFHRAGYIKRLEWLAPYGASALFAAGGTGEFFSLAASEYSEIIKTAVDTCATSVPILAGVGGATRQAIEYAQEAERLGAKGLLLLPHYLTEASQDGVAAHVEAVCKSVKIGVVVYNRNVCRLTPTLLEQLAERCPNLIGYKDGLGDIELMVSIRRRLGDRFSYLGGLPTAEVYAAAYKALGVPVYSSAVFNFVPKLAMDFYHAIARDDHQAVGKYIDDFFLPYLEIRNRKAGYAVSIVKAGAKIAGYDAGPVRAPLTDLTSDECDMLAALMDKQGKQ.

The protein belongs to the DapA family.

The enzyme catalyses 5-dehydro-4-deoxy-D-glucarate + H(+) = 2,5-dioxopentanoate + CO2 + H2O. It functions in the pathway carbohydrate acid metabolism; D-glucarate degradation; 2,5-dioxopentanoate from D-glucarate: step 2/2. This Pseudomonas syringae pv. syringae (strain B728a) protein is Probable 5-dehydro-4-deoxyglucarate dehydratase.